Reading from the N-terminus, the 215-residue chain is Ribose-5-phosphate isomerase A (215 aa).

Residues 26–29 (TGST), 79–82 (DGAD), and 92–95 (KGGG) contribute to the substrate site. The active-site Proton acceptor is Glu-101. Lys-119 contributes to the substrate binding site.

This sequence belongs to the ribose 5-phosphate isomerase family. As to quaternary structure, homodimer.

The catalysed reaction is aldehydo-D-ribose 5-phosphate = D-ribulose 5-phosphate. Its pathway is carbohydrate degradation; pentose phosphate pathway; D-ribose 5-phosphate from D-ribulose 5-phosphate (non-oxidative stage): step 1/1. Functionally, catalyzes the reversible conversion of ribose-5-phosphate to ribulose 5-phosphate. The sequence is that of Ribose-5-phosphate isomerase A from Xylella fastidiosa (strain Temecula1 / ATCC 700964).